The following is a 220-amino-acid chain: Deoxyribose-phosphate aldolase 1 (220 aa).

Asp-89 serves as the catalytic Proton donor/acceptor. Lys-151 serves as the catalytic Schiff-base intermediate with acetaldehyde. The active-site Proton donor/acceptor is Lys-180.

The protein belongs to the DeoC/FbaB aldolase family. DeoC type 1 subfamily.

It localises to the cytoplasm. The catalysed reaction is 2-deoxy-D-ribose 5-phosphate = D-glyceraldehyde 3-phosphate + acetaldehyde. The protein operates within carbohydrate degradation; 2-deoxy-D-ribose 1-phosphate degradation; D-glyceraldehyde 3-phosphate and acetaldehyde from 2-deoxy-alpha-D-ribose 1-phosphate: step 2/2. Catalyzes a reversible aldol reaction between acetaldehyde and D-glyceraldehyde 3-phosphate to generate 2-deoxy-D-ribose 5-phosphate. In Staphylococcus aureus (strain MSSA476), this protein is Deoxyribose-phosphate aldolase 1.